Reading from the N-terminus, the 62-residue chain is UPF0434 protein Smed_3047 (62 aa).

It belongs to the UPF0434 family.

This Sinorhizobium medicae (strain WSM419) (Ensifer medicae) protein is UPF0434 protein Smed_3047.